A 145-amino-acid polypeptide reads, in one-letter code: Bacilliredoxin GK2368 (145 aa).

The protein belongs to the bacilliredoxin family.

This is Bacilliredoxin GK2368 from Geobacillus kaustophilus (strain HTA426).